The sequence spans 293 residues: Elongation factor Ts (293 aa).

Residues 79 to 82 are involved in Mg(2+) ion dislocation from EF-Tu; that stretch reads TDFV.

It belongs to the EF-Ts family.

Its subcellular location is the cytoplasm. In terms of biological role, associates with the EF-Tu.GDP complex and induces the exchange of GDP to GTP. It remains bound to the aminoacyl-tRNA.EF-Tu.GTP complex up to the GTP hydrolysis stage on the ribosome. This Halalkalibacterium halodurans (strain ATCC BAA-125 / DSM 18197 / FERM 7344 / JCM 9153 / C-125) (Bacillus halodurans) protein is Elongation factor Ts (tsf).